The sequence spans 466 residues: Ribulose bisphosphate carboxylase/oxygenase activase, chloroplastic (466 aa).

The N-terminal 48 residues, 1-48 (MAAAFSSTVGAPASTPTNFLGKKLKKQVTSAVNYHGKSSNINRFKVMA), are a transit peptide targeting the chloroplast. 156 to 163 (GGKGQGKS) contributes to the ATP binding site. The disordered stretch occupies residues 429–454 (QGAQQAGNLPVPEGCTDPVAKNFDPT).

This sequence belongs to the RuBisCO activase family.

It is found in the plastid. The protein localises to the chloroplast stroma. Its function is as follows. Activation of RuBisCO (ribulose-1,5-bisphosphate carboxylase/oxygenase; EC 4.1.1.39) involves the ATP-dependent carboxylation of the epsilon-amino group of lysine leading to a carbamate structure. The sequence is that of Ribulose bisphosphate carboxylase/oxygenase activase, chloroplastic (RCA) from Oryza sativa subsp. japonica (Rice).